An 85-amino-acid chain; its full sequence is Exodeoxyribonuclease 7 small subunit (85 aa).

The tract at residues 66–85 is disordered; the sequence is SGEGEEVPLDTPDAEDGDGE. Residues 68 to 85 show a composition bias toward acidic residues; sequence EGEEVPLDTPDAEDGDGE.

Belongs to the XseB family. As to quaternary structure, heterooligomer composed of large and small subunits.

Its subcellular location is the cytoplasm. It carries out the reaction Exonucleolytic cleavage in either 5'- to 3'- or 3'- to 5'-direction to yield nucleoside 5'-phosphates.. Functionally, bidirectionally degrades single-stranded DNA into large acid-insoluble oligonucleotides, which are then degraded further into small acid-soluble oligonucleotides. In Thioalkalivibrio sulfidiphilus (strain HL-EbGR7), this protein is Exodeoxyribonuclease 7 small subunit.